Consider the following 1159-residue polypeptide: CRISPR-associated endoribonuclease Cas13a (1159 aa).

The binds crRNA repeat and spacer stretch occupies residues 1–11; sequence MKVTKVGGISH. Residues 1–170 are NTD; that stretch reads MKVTKVGGIS…NNIEKVEGKS (170 aa). Binds crRNA repeat regions lie at residues 139–151, 172–176, 224–233, 271–276, 294–297, and 301–305; these read NKIN…FEKN, RNIIY, REFYHEIIGR, QVFYKY, HFVE, and SQLLK. The tract at residues 171-360 is helical-1; it reads KRNIIYDYYR…YNYYLQDGEI (190 aa). The segment at 319 to 328 is binds crRNA processing site; that stretch reads KIKRIFEYQN. Binds crRNA repeat stretches follow at residues 336–340 and 371–378; these read KLLNK and QNEAFLRN. An HEPN-like fold 1-I region spans residues 361–508; that stretch reads ATSDFIARNR…SKKMFQNEIN (148 aa). Catalysis depends on for target RNA cleavage residues arginine 472 and histidine 477. The segment at 509–751 is helical-2; sequence EKKLKLKIFR…EFLREIKLGN (243 aa). Positions 519–522 are binds target RNA; that stretch reads QLNS. A binds crRNA spacer region spans residues 547–558; the sequence is NKNIPFVPSFTK. The interval 590–597 is binds target RNA; sequence DAQIYLLK. The interval 718-722 is binds crRNA spacer; that stretch reads KQEFD. The interval 752–813 is HEPN-like fold 1-II; that stretch reads ILKYTERLNM…NLDNNRVTED (62 aa). Residues 780–783 form a binds crRNA repeat region; that stretch reads SLEK. The interval 804-810 is binds crRNA spacer and target RNA; that stretch reads NLDNNRV. Positions 814–946 are linker; it reads FELEADEIGK…EYTHLKNKVE (133 aa). Binds crRNA spacer stretches follow at residues 845–857 and 938–942; these read KIYF…IKHR and YTHLK. The stretch at 880–946 forms a coiled coil; that stretch reads YKISIEELKK…EYTHLKNKVE (67 aa). The interval 947 to 1159 is HEPN-like fold 2; sequence FNELNLLQGL…YKMEEKKSEN (213 aa). Residues 962–963 are binds crRNA repeat; that stretch reads HR. The tract at residues 995-998 is binds 3'-end of target RNA, in adjacent protein; sequence FENK. Catalysis depends on for target RNA cleavage residues arginine 1048 and histidine 1053. 2 binds crRNA processing site regions span residues 1072–1082 and 1104–1108; these read RKLLSYDRKLK and IGADK.

Belongs to the CRISPR-associated endoribonuclease Cas13a family. As to quaternary structure, crystals show the 3'-end of target RNA interacting with an adjacent protein molecule, and mutagenesis of those amino acid residues decreases target RNA cleavage, but it is not clear if this is physiological. A divalent metal cation serves as cofactor.

Its activity is regulated as follows. Target RNA acts as an activator for non-specific ssRNA cleavage; the target RNA and complementary crRNA must both be at least 20 nucleotides long to activate the HEPN-like catalytic pocket for RNase activity. CRISPR (clustered regularly interspaced short palindromic repeat), is an adaptive immune system that provides protection against mobile genetic elements (viruses, transposable elements and conjugative plasmids). CRISPR clusters contain sequences complementary to antecedent mobile elements (spacer sequences) and target invading nucleic acids. Unlike many single-component effectors, this CRISPR-Cas system targets RNA. CRISPR clusters are transcribed from pre-CRISPR RNA (crRNA) and processed into crRNA by this protein. pre-crRNA processing yields a 5'-OH and probably a 2',3'-cyclic phosphate. Also cleaves pre-crRNA from several other type VI-A CRISPR systems. Cleaves linear target ssRNA in a crRNA-dependent fashion, preferentially before U residues. Cleavage of target ssRNA is about 80-fold faster than pre-crRNA processing and uses a different active site. Binding a viable target RNA target activates this protein for non-specific RNA degradation in vitro (called collateral RNA degradation). Activation occurs with 10 fM target RNA. crRNA maturation is not essential for activation of RNA degradation, but lack of mature crRNA (due to mutagenesis) decreases activation levels. This system has a 3' protospacer flanking site in the target RNA (PFS), which is C and unavailable to base pair with crRNA (PFS is equivalent to PAM, the protospacer adjacent motif). The protein is CRISPR-associated endoribonuclease Cas13a of Leptotrichia buccalis (strain ATCC 14201 / DSM 1135 / JCM 12969 / NCTC 10249 / C-1013-b).